The following is a 537-amino-acid chain: Copine-1 (537 aa).

2 C2 domains span residues 1-114 (MAHC…TLPL) and 123-245 (GRGT…ECIH). Ca(2+) is bound by residues Asp-21, Asp-27, Asp-80, Asp-82, Asp-92, Asp-153, and Asp-159. The residue at position 171 (Lys-171) is an N6-acetyllysine. Residues Asp-214, Asp-216, and Asp-222 each coordinate Ca(2+). Positions 285–505 (NFTVGVDFTG…ALAQTVLAEV (221 aa)) constitute a VWFA domain.

It belongs to the copine family. Homodimer; homodimerizes via its C2 domains. Interacts with p65/RELA (via N-terminus); this interaction induces proteolytic cleavage of p65/RELA subunit and inhibition of NF-kappa-B transcriptional activity. Interacts (via VWFA domain) with ACTB, CCDC22, MYCBP2, PPP5C, RDX and UBE2O. Ca(2+) is required as a cofactor. In terms of tissue distribution, expressed in liver, spleen, muscle, testis, adrenal (at protein level).

The protein localises to the nucleus. It is found in the cytoplasm. The protein resides in the cell membrane. Its function is as follows. Calcium-dependent phospholipid-binding protein that plays a role in calcium-mediated intracellular processes. Involved in the TNF-alpha receptor signaling pathway in a calcium-dependent manner. Exhibits calcium-dependent phospholipid binding properties. Plays a role in neuronal progenitor cell differentiation; induces neurite outgrowth via a AKT-dependent signaling cascade and calcium-independent manner. May recruit target proteins to the cell membrane in a calcium-dependent manner. May function in membrane trafficking. Involved in TNF-alpha-induced NF-kappa-B transcriptional repression by inducing endoprotease processing of the transcription factor NF-kappa-B p65/RELA subunit. Also induces endoprotease processing of NF-kappa-B p50/NFKB1, p52/NFKB2, RELB and REL. This chain is Copine-1, found in Bos taurus (Bovine).